Here is a 626-residue protein sequence, read N- to C-terminus: Basic helix-loop-helix ARNT-like protein 1 (626 aa).

Residues 1-60 (MADQRMDISSTISDFMSPGPTDLLSSSLGTSGVDCNRKRKGSSTDYQESMDTDKDDPHGR) are disordered. Ser17 bears the Phosphoserine; by GSK3-beta mark. Low complexity predominate over residues 17–32 (SPGPTDLLSSSLGTSG). Thr21 bears the Phosphothreonine; by GSK3-beta mark. Residues 36–41 (NRKRKG) carry the Nuclear localization signal motif. Basic and acidic residues predominate over residues 51-60 (DTDKDDPHGR). The region spanning 72-125 (NAREAHSQIEKRRRDKMNSFIDELASLVPTCNAMSRKLDKLTVLRMAVQHMKTL) is the bHLH domain. Phosphoserine is present on Ser78. Residue Ser90 is modified to Phosphoserine; by CK2. The short motif at 142 to 152 (LSDDELKHLIL) is the Nuclear export signal 1 element. In terms of domain architecture, PAS 1 spans 143–215 (SDDELKHLIL…EQLSSSDTAP (73 aa)). Lys252 participates in a covalent cross-link: Glycyl lysine isopeptide (Lys-Gly) (interchain with G-Cter in SUMO2 and SUMO3). A Glycyl lysine isopeptide (Lys-Gly) (interchain with G-Cter in SUMO2) cross-link involves residue Lys259. The PAS 2 domain maps to 326–396 (PQPVNGEIRV…ECHRQVLQTR (71 aa)). A Nuclear export signal 2 motif is present at residues 361-369 (LAYLPQELL). The PAC domain maps to 401 to 444 (TNCYKFKIKDGSFITLRSRWFSFMNPWTKEVEYIVSTNTVVLAN). Disordered regions lie at residues 458 to 493 (ASPH…AGAG) and 511 to 595 (GSSP…SPSN). Residues 484 to 493 (IPGGTRAGAG) show a composition bias toward gly residues. The tract at residues 508-588 (RIRGSSPSSC…IGIDMIDNDQ (81 aa)) is interaction with CIART. Positions 511–521 (GSSPSSCGSSP) are enriched in low complexity. At Lys538 the chain carries N6-acetyllysine.

In terms of assembly, component of the circadian clock oscillator which includes the CRY1/2 proteins, CLOCK or NPAS2,BMAL1 or BMAL2, CSNK1D and/or CSNK1E, TIMELESS and the PER1/2/3 proteins. Forms a heterodimer with CLOCK. The CLOCK-BMAL1 heterodimer is required for E-box-dependent transactivation, for CLOCK nuclear translocation and degradation, and, for phosphorylation of both CLOCK and BMAL1. Part of a nuclear complex which also includes RACK1 and PRKCA; RACK1 and PRKCA are recruited to the complex in a circadian manner. Interacts with NPAS2. Interacts with EZH2. Interacts with SUMO3. Interacts with SIRT1. Interacts with AHR. Interacts with ID1, ID2 and ID3. Interacts with DDX4. Interacts with OGT. Interacts with EED and SUZ12. Interacts with MTA1. Interacts with CIART. Interacts with HSP90. Interacts with KAT2B and EP300. Interacts with BHLHE40/DEC1 and BHLHE41/DEC2. Interacts with RELB and the interaction is enhanced in the presence of CLOCK. Interacts with PER1, PER2, CRY1 and CRY2 and this interaction requires a translocation to the nucleus. Interaction of the CLOCK-BMAL1 heterodimer with PER or CRY inhibits transcription activation. Interaction of the CLOCK-BMAL1 with CRY1 is independent of DNA but with PER2 is off DNA. The CLOCK-BMAL1 heterodimer interacts with GSK3B. Interacts with KDM5A. Interacts with KMT2A; in a circadian manner. Interacts with UBE3A. Interacts with PRKCG. Interacts with MAGEL2. Interacts with NCOA2. Interacts with THRAP3. The CLOCK-BMAL1 heterodimer interacts with PASD1. Interacts with PASD1. Interacts with USP9X. Interacts with PIWIL2 (via PIWI domain). Interacts with HDAC3. Interacts with HNF4A. Ubiquitinated, leading to its proteasomal degradation. Deubiquitinated by USP9X. Post-translationally, O-glycosylated; contains O-GlcNAc. O-glycosylation by OGT prevents protein degradation by inhibiting ubiquitination. It also stabilizes the CLOCK-BMAL1 heterodimer thereby increasing CLOCK-BMAL1-mediated transcription of genes in the negative loop of the circadian clock such as PER1/2/3 and CRY1/2. In terms of processing, acetylated on Lys-538 by CLOCK during the repression phase of the circadian cycle. Acetylation facilitates recruitment of CRY1 protein and initiates the repression phase of the circadian cycle. Acetylated at Lys-538 by KAT5 during the activation phase of the cycle, leading to recruitment of the positive transcription elongation factor b (P-TEFb) and BRD4, followed by productive elongation of circadian transcripts. Deacetylated by SIRT1, which may result in decreased protein stability. Phosphorylated upon dimerization with CLOCK. Phosphorylation enhances the transcriptional activity, alters the subcellular localization and decreases the stability of the CLOCK-BMAL1 heterodimer by promoting its degradation. Phosphorylation shows circadian variations in the liver with a peak between CT10 to CT14. Phosphorylation at Ser-90 by CK2 is essential for its nuclear localization, its interaction with CLOCK and controls CLOCK nuclear entry. Dephosphorylation at Ser-78 is important for dimerization with CLOCK and transcriptional activity. Post-translationally, sumoylated on Lys-259 upon dimerization with CLOCK. Predominantly conjugated to poly-SUMO2/3 rather than SUMO1 and the level of these conjugates undergo rhythmic variation, peaking at CT9-CT12. Sumoylation localizes it exclusively to the PML body and promotes its ubiquitination in the PML body, ubiquitin-dependent proteasomal degradation and the transcriptional activity of the CLOCK-BMAL1 heterodimer. In terms of processing, undergoes lysosome-mediated degradation in a time-dependent manner in the liver. In terms of tissue distribution, hair follicles (at protein level). Highly expressed in the adult brain, skeletal muscle and heart.

It is found in the nucleus. The protein localises to the cytoplasm. It localises to the PML body. Its activity is regulated as follows. There is conflicting data about the effect of NAD cofactors on activity. PubMed:11441146 suggests that the redox state of the cell can modulate the transcriptional activity of the CLOCK-BMAL1 heterodimer; NADH and NADPH enhance the DNA-binding activity of the heterodimer. PubMed:23229515 reports that NADH and NADPH have no significant effect on DNA-binding activity of the CLOCK-BMAL1 heterodimer. In terms of biological role, transcriptional activator which forms a core component of the circadian clock. The circadian clock, an internal time-keeping system, regulates various physiological processes through the generation of approximately 24 hour circadian rhythms in gene expression, which are translated into rhythms in metabolism and behavior. It is derived from the Latin roots 'circa' (about) and 'diem' (day) and acts as an important regulator of a wide array of physiological functions including metabolism, sleep, body temperature, blood pressure, endocrine, immune, cardiovascular, and renal function. Consists of two major components: the central clock, residing in the suprachiasmatic nucleus (SCN) of the brain, and the peripheral clocks that are present in nearly every tissue and organ system. Both the central and peripheral clocks can be reset by environmental cues, also known as Zeitgebers (German for 'timegivers'). The predominant Zeitgeber for the central clock is light, which is sensed by retina and signals directly to the SCN. The central clock entrains the peripheral clocks through neuronal and hormonal signals, body temperature and feeding-related cues, aligning all clocks with the external light/dark cycle. Circadian rhythms allow an organism to achieve temporal homeostasis with its environment at the molecular level by regulating gene expression to create a peak of protein expression once every 24 hours to control when a particular physiological process is most active with respect to the solar day. Transcription and translation of core clock components (CLOCK, NPAS2, BMAL1, BMAL2, PER1, PER2, PER3, CRY1 and CRY2) plays a critical role in rhythm generation, whereas delays imposed by post-translational modifications (PTMs) are important for determining the period (tau) of the rhythms (tau refers to the period of a rhythm and is the length, in time, of one complete cycle). A diurnal rhythm is synchronized with the day/night cycle, while the ultradian and infradian rhythms have a period shorter and longer than 24 hours, respectively. Disruptions in the circadian rhythms contribute to the pathology of cardiovascular diseases, cancer, metabolic syndromes and aging. A transcription/translation feedback loop (TTFL) forms the core of the molecular circadian clock mechanism. Transcription factors, CLOCK or NPAS2 and BMAL1 or BMAL2, form the positive limb of the feedback loop, act in the form of a heterodimer and activate the transcription of core clock genes and clock-controlled genes (involved in key metabolic processes), harboring E-box elements (5'-CACGTG-3') within their promoters. The core clock genes: PER1/2/3 and CRY1/2 which are transcriptional repressors form the negative limb of the feedback loop and interact with the CLOCK|NPAS2-BMAL1|BMAL2 heterodimer inhibiting its activity and thereby negatively regulating their own expression. This heterodimer also activates nuclear receptors NR1D1/2 and RORA/B/G, which form a second feedback loop and which activate and repress BMAL1 transcription, respectively. BMAL1 positively regulates myogenesis and negatively regulates adipogenesis via the transcriptional control of the genes of the canonical Wnt signaling pathway. Plays a role in normal pancreatic beta-cell function; regulates glucose-stimulated insulin secretion via the regulation of antioxidant genes NFE2L2/NRF2 and its targets SESN2, PRDX3, CCLC and CCLM. Negatively regulates the mTORC1 signaling pathway; regulates the expression of MTOR and DEPTOR. Controls diurnal oscillations of Ly6C inflammatory monocytes; rhythmic recruitment of the PRC2 complex imparts diurnal variation to chemokine expression that is necessary to sustain Ly6C monocyte rhythms. Regulates the expression of HSD3B2, STAR, PTGS2, CYP11A1, CYP19A1 and LHCGR in the ovary and also the genes involved in hair growth. Plays an important role in adult hippocampal neurogenesis by regulating the timely entry of neural stem/progenitor cells (NSPCs) into the cell cycle and the number of cell divisions that take place prior to cell-cycle exit. Regulates the circadian expression of CIART and KLF11. The CLOCK-BMAL1 heterodimer regulates the circadian expression of SERPINE1/PAI1, VWF, B3, CCRN4L/NOC, NAMPT, DBP, MYOD1, PPARGC1A, PPARGC1B, SIRT1, GYS2, F7, NGFR, GNRHR, BHLHE40/DEC1, ATF4, MTA1, KLF10 and also genes implicated in glucose and lipid metabolism. Promotes rhythmic chromatin opening, regulating the DNA accessibility of other transcription factors. The NPAS2-BMAL1 heterodimer positively regulates the expression of MAOA, F7 and LDHA and modulates the circadian rhythm of daytime contrast sensitivity by regulating the rhythmic expression of adenylate cyclase type 1 (ADCY1) in the retina. The preferred binding motif for the CLOCK-BMAL1 heterodimer is 5'-CACGTGA-3', which contains a flanking adenine nucleotide at the 3-prime end of the canonical 6-nucleotide E-box sequence. CLOCK specifically binds to the half-site 5'-CAC-3', while BMAL1 binds to the half-site 5'-GTGA-3'. The CLOCK-BMAL1 heterodimer also recognizes the non-canonical E-box motifs 5'-AACGTGA-3' and 5'-CATGTGA-3'. Essential for the rhythmic interaction of CLOCK with ASS1 and plays a critical role in positively regulating CLOCK-mediated acetylation of ASS1. Plays a role in protecting against lethal sepsis by limiting the expression of immune checkpoint protein CD274 in macrophages in a PKM2-dependent manner. Regulates the diurnal rhythms of skeletal muscle metabolism via transcriptional activation of genes promoting triglyceride synthesis (DGAT2) and metabolic efficiency (COQ10B). Its function is as follows. (Microbial infection) Regulates SARS coronavirus-2/SARS-CoV-2 entry and replication in lung epithelial cells probably through the post-transcriptional regulation of ACE2 and interferon-stimulated gene expression. The chain is Basic helix-loop-helix ARNT-like protein 1 from Homo sapiens (Human).